Consider the following 191-residue polypeptide: Flagellar transcriptional regulator FlhC (191 aa).

Residues Cys-139, Cys-142, Cys-159, and Cys-162 each contribute to the Zn(2+) site.

Belongs to the FlhC family. In terms of assembly, heterohexamer composed of two FlhC and four FlhD subunits. Each FlhC binds a FlhD dimer, forming a heterotrimer, and a hexamer assembles by dimerization of two heterotrimers. Zn(2+) serves as cofactor.

Its subcellular location is the cytoplasm. Its function is as follows. Functions in complex with FlhD as a master transcriptional regulator that regulates transcription of several flagellar and non-flagellar operons by binding to their promoter region. Activates expression of class 2 flagellar genes, including fliA, which is a flagellum-specific sigma factor that turns on the class 3 genes. Also regulates genes whose products function in a variety of physiological pathways. This chain is Flagellar transcriptional regulator FlhC, found in Enterobacter cloacae subsp. cloacae (strain ATCC 13047 / DSM 30054 / NBRC 13535 / NCTC 10005 / WDCM 00083 / NCDC 279-56).